We begin with the raw amino-acid sequence, 399 residues long: MRKKYFGFLILGVLLAGYIYVPLPDNVEEPWKIMLLNTFLKTSSYLALFGEILGLNHFMKSMALFSRIQGFPPTSDENIIVKDTTFNDIPVRIYVPQQKTKSLRRGLFYIHGGGWCFGSNDYYSYDLLSRWTAERLDAVVISTNYRLAPKYHFPVQFEDVYTALKWFLDPQNLESYGVDPGRIGISGDSAGGNLAAAVAQQLLEDPDVKIKLKVQTLIYPALQNFDFDLPSYRENAHYPVLSKSLMVRFWSEYFTTDRSLKKAMLSNQHIPLESSNLFKFVNWSSLLPEKFKKGHIYKTPTHGSSELAKKYPGILDVKASPLLADDSKLRGLPLTYVITCQYDVLRDDGLMYVTRLQKSGVQVIHNHVEGAFHGTLAFLFTKVGYRAANQYINWLHENL.

Topologically, residues Met-1–Lys-4 are cytoplasmic. A helical; Signal-anchor for type II membrane protein transmembrane segment spans residues Tyr-5–Asp-25. Topologically, residues Asn-26–Leu-399 are lumenal. The Involved in the stabilization of the negatively charged intermediate by the formation of the oxyanion hole signature appears at His-111 to Gly-113. Cysteines 116 and 340 form a disulfide. Ser-189 is a catalytic residue. The N-linked (GlcNAc...) asparagine glycan is linked to Asn-282. Active-site residues include Asp-343 and His-373.

This sequence belongs to the 'GDXG' lipolytic enzyme family.

The protein localises to the endoplasmic reticulum membrane. The protein resides in the microsome membrane. The catalysed reaction is a triacylglycerol + H2O = a diacylglycerol + a fatty acid + H(+). Functionally, displays cellular triglyceride lipase activity in liver, increases the levels of intracellular fatty acids derived from the hydrolysis of newly formed triglyceride stores and plays a role in very low-density lipoprotein assembly. Displays serine esterase activity in liver. Deacetylates a variety of arylacetamide substrates, including xenobiotic compounds and procarcinogens, converting them to the primary arylamide compounds and increasing their toxicity. This chain is Arylacetamide deacetylase (AADAC), found in Bos taurus (Bovine).